A 1657-amino-acid chain; its full sequence is Ras GTPase-activating-like protein IQGAP1 (1657 aa).

Position 2 is an N-acetylserine (serine 2). A Phosphoserine modification is found at serine 2. Positions 44–159 (LCHLEEAKRW…YCIHALSLYL (116 aa)) constitute a Calponin-homology (CH) domain. Residue tyrosine 172 is modified to Phosphotyrosine. Serine 330 carries the phosphoserine modification. The region spanning 685–710 (WVKHWVKGGYHYYHNLETQAGGWAEP) is the WW domain. 4 consecutive IQ domains span residues 745–774 (NEGL…FLKK), 775–804 (QIPA…YLHS), 805–834 (HKDE…YFRD), and 835–864 (HIND…AEDP). Residues 956-1274 (GGLKALSKEK…FFQVACDVPE (319 aa)) are C1. The region spanning 1020–1269 (YLLLRLFQTA…QKFRRFFQVA (250 aa)) is the Ras-GAP domain. The interval 1276–1657 (QDKFNVDEYS…FLLNKKFYGK (382 aa)) is C2. Position 1441 is a phosphoserine (serine 1441).

As to quaternary structure, interacts with CDC42; the interaction is demonstrated with IQGAP1 in GTP-bound and in nucleotide-free state. Interacts with RAC1. Does not interact with RHOA. Interacts with TSG101. Interacts with PAK6. Interacts with SASH1. Interacts with PJVK. Interacts with SLC26A4. This interaction enhances the chloride-bicarbonate exchange activity of SLC26A4. Interacts with SVEP1. Interacts with ILK; the interaction is required for localization of IQGAP to the cell cortex. (Microbial infection) In case of infection, interacts with S.typhimurium protein sseI. Expressed in the kidney (at protein level).

The protein resides in the cell membrane. The protein localises to the nucleus. Its subcellular location is the cytoplasm. It localises to the cell cortex. It is found in the apical cell membrane. The protein resides in the basolateral cell membrane. Plays a crucial role in regulating the dynamics and assembly of the actin cytoskeleton. Recruited to the cell cortex by interaction with ILK which allows it to cooperate with its effector DIAPH1 to locally stabilize microtubules and allow stable insertion of caveolae into the plasma membrane. Binds to activated CDC42 but does not stimulate its GTPase activity. Associates with calmodulin. May promote neurite outgrowth. May play a possible role in cell cycle regulation by contributing to cell cycle progression after DNA replication arrest. In Mus musculus (Mouse), this protein is Ras GTPase-activating-like protein IQGAP1 (Iqgap1).